The primary structure comprises 280 residues: Inner membrane ABC transporter permease protein YcjP (280 aa).

Over 1-10 the chain is Cytoplasmic; the sequence is MATNKRTLSR. The chain crosses the membrane as a helical span at residues 11–31; it reads IGFYCGLALFLIITLFPFFVM. Topologically, residues 32 to 53 are periplasmic; it reads LMTSFKGAKEAISLHPTLLPQQ. The chain crosses the membrane as a helical span at residues 54–74; the sequence is WTLEHYVDIFNPMIFPFVDYF. The 192-residue stretch at 74–265 folds into the ABC transmembrane type-1 domain; it reads FRNSLVVSVV…LPVVIMYALS (192 aa). The Cytoplasmic segment spans residues 75–77; the sequence is RNS. The chain crosses the membrane as a helical span at residues 78–98; the sequence is LVVSVVSSVVAVFLGILGAYA. Residues 99–117 are Periplasmic-facing; the sequence is LSRLRFKGRMTINASFYTV. Residues 118 to 138 traverse the membrane as a helical segment; that stretch reads YMFSGILLVVPLFKIITALGI. The Cytoplasmic segment spans residues 139-140; sequence YD. A helical membrane pass occupies residues 141 to 161; the sequence is TEMALIITMVTQTLPTAVFML. Residues 162–189 lie on the Periplasmic side of the membrane; the sequence is KSYFDTIPDEIEEAAMMDGLNRLQIIFR. A helical membrane pass occupies residues 190-210; the sequence is ITVPLAMSGLISVFVYCFMVA. Topologically, residues 211–214 are cytoplasmic; it reads WNDY. Residues 215 to 235 traverse the membrane as a helical segment; sequence LFASIFLSSASNFTLPVGLNA. Residues 236–242 lie on the Periplasmic side of the membrane; it reads LFSTPDY. The helical transmembrane segment at 243 to 263 threads the bilayer; the sequence is IWGRMMAASLVTALPVVIMYA. Topologically, residues 264–280 are cytoplasmic; sequence LSERFIKSGLTAGGVKG.

It belongs to the binding-protein-dependent transport system permease family. MalFG subfamily.

Its subcellular location is the cell inner membrane. In terms of biological role, probably part of the binding-protein-dependent transport system YcjNOP. Probably responsible for the translocation of the substrate across the membrane. In Escherichia coli (strain K12), this protein is Inner membrane ABC transporter permease protein YcjP (ycjP).